Consider the following 442-residue polypeptide: Mitochondrial distribution and morphology protein 12 (442 aa).

Residues 1–442 form the SMP-LTD domain; it reads MSIDINWEAA…VYPSFWTFLV (442 aa). Disordered regions lie at residues 67–125, 202–277, and 364–387; these read NDFY…RVGY, LSLA…RRMR, and EGYH…RRSN. The segment covering 69-80 has biased composition (acidic residues); the sequence is FYEEDEDGEDLS. The segment covering 90-100 has biased composition (polar residues); the sequence is PSSQGLSQSTP. The segment covering 101–112 has biased composition (low complexity); it reads NGDAGSSNSSSN. A compositionally biased stretch (basic and acidic residues) spans 213-222; that stretch reads RQRERARSSD. A compositionally biased stretch (low complexity) spans 227–245; it reads SPQSRSRPSTSSTRQRTST.

Belongs to the MDM12 family. In terms of assembly, component of the ER-mitochondria encounter structure (ERMES) or MDM complex, composed of MMM1, MDM10, MDM12 and MDM34. An MMM1 homodimer associates with one molecule of MDM12 on each side in a pairwise head-to-tail manner, and the SMP-LTD domains of MMM1 and MDM12 generate a continuous hydrophobic tunnel for phospholipid trafficking.

It localises to the mitochondrion outer membrane. It is found in the endoplasmic reticulum membrane. In terms of biological role, component of the ERMES/MDM complex, which serves as a molecular tether to connect the endoplasmic reticulum (ER) and mitochondria. Components of this complex are involved in the control of mitochondrial shape and protein biogenesis, and function in nonvesicular lipid trafficking between the ER and mitochondria. MDM12 is required for the interaction of the ER-resident membrane protein MMM1 and the outer mitochondrial membrane-resident beta-barrel protein MDM10. The MDM12-MMM1 subcomplex functions in the major beta-barrel assembly pathway that is responsible for biogenesis of all mitochondrial outer membrane beta-barrel proteins, and acts in a late step after the SAM complex. The MDM10-MDM12-MMM1 subcomplex further acts in the TOM40-specific pathway after the action of the MDM12-MMM1 complex. Essential for establishing and maintaining the structure of mitochondria and maintenance of mtDNA nucleoids. This Arthroderma otae (strain ATCC MYA-4605 / CBS 113480) (Microsporum canis) protein is Mitochondrial distribution and morphology protein 12.